The primary structure comprises 1048 residues: Anguibactin system regulator (1048 aa).

Residues 965–1039 (PIITASEDRV…AFAIIMDRCR (75 aa)) enclose the Carrier domain.

It belongs to the ATP-dependent AMP-binding enzyme family.

It functions in the pathway siderophore biosynthesis; anguibactin biosynthesis. Functionally, bifunctional protein that plays an essential role in virulence. Plays a role in both production of the siderophore anguibactin and regulation of iron transport genes. The chain is Anguibactin system regulator (angR) from Vibrio anguillarum (strain ATCC 68554 / 775) (Listonella anguillarum).